A 267-amino-acid chain; its full sequence is 4-hydroxy-tetrahydrodipicolinate reductase (267 aa).

NAD(+) contacts are provided by residues 8-13 (GAAGRM) and Asp-34. An NADP(+)-binding site is contributed by Arg-35. NAD(+) contacts are provided by residues 98-100 (GTT) and 122-125 (AANF). His-155 (proton donor/acceptor) is an active-site residue. Residue His-156 coordinates (S)-2,3,4,5-tetrahydrodipicolinate. Residue Lys-159 is the Proton donor of the active site. 165–166 (GT) serves as a coordination point for (S)-2,3,4,5-tetrahydrodipicolinate.

Belongs to the DapB family.

The protein resides in the cytoplasm. The enzyme catalyses (S)-2,3,4,5-tetrahydrodipicolinate + NAD(+) + H2O = (2S,4S)-4-hydroxy-2,3,4,5-tetrahydrodipicolinate + NADH + H(+). It carries out the reaction (S)-2,3,4,5-tetrahydrodipicolinate + NADP(+) + H2O = (2S,4S)-4-hydroxy-2,3,4,5-tetrahydrodipicolinate + NADPH + H(+). It participates in amino-acid biosynthesis; L-lysine biosynthesis via DAP pathway; (S)-tetrahydrodipicolinate from L-aspartate: step 4/4. Its function is as follows. Catalyzes the conversion of 4-hydroxy-tetrahydrodipicolinate (HTPA) to tetrahydrodipicolinate. This Pseudomonas putida (strain W619) protein is 4-hydroxy-tetrahydrodipicolinate reductase.